The chain runs to 326 residues: Adenosine receptor A1 (326 aa).

At 1–10 (MPPYISAFQA) the chain is on the extracellular side. A helical transmembrane segment spans residues 11-33 (AYIGIEVLIALVSVPGNVLVIWA). The Cytoplasmic segment spans residues 34–46 (VKVNQALRDATFC). The helical transmembrane segment at 47-69 (FIVSLAVADVAVGALVIPLAILI) threads the bilayer. The Extracellular segment spans residues 70–80 (NIGPQTYFHTC). A disulfide bridge connects residues Cys80 and Cys169. A helical membrane pass occupies residues 81-102 (LMVACPVLILTQSSILALLAIA). At 103-123 (VDRYLRVKIPLRYKTVVTQRR) the chain is on the cytoplasmic side. Residues 124-146 (AAVAIAGCWILSLVVGLTPMFGW) traverse the membrane as a helical segment. Residues 147–176 (NNLSEVEQAWIANGSVGEPVIKCEFEKVIS) lie on the Extracellular side of the membrane. N-linked (GlcNAc...) asparagine glycans are attached at residues Asn148 and Asn159. The chain crosses the membrane as a helical span at residues 177 to 201 (MEYMVYFNFFVWVLPPLLLMVLIYL). Residues 202 to 235 (EVFYLIRKQLNKKVSASSGDPQKYYGKELKIAKS) lie on the Cytoplasmic side of the membrane. A helical transmembrane segment spans residues 236-259 (LALILFLFALSWLPLHILNCITLF). Topologically, residues 260–267 (CPTCQKPS) are extracellular. A helical membrane pass occupies residues 268-292 (ILIYIAIFLTHGNSAMNPIVYAFRI). Residues 293-326 (HKFRVTFLKIWNDHFRCQPKPPIEEDIPEEKADD) lie on the Cytoplasmic side of the membrane. Cys309 is lipidated: S-palmitoyl cysteine.

The protein belongs to the G-protein coupled receptor 1 family.

The protein resides in the cell membrane. Functionally, receptor for adenosine. The activity of this receptor is mediated by G proteins which inhibit adenylyl cyclase. The polypeptide is Adenosine receptor A1 (Adora1) (Mus musculus (Mouse)).